A 159-amino-acid polypeptide reads, in one-letter code: 6,7-dimethyl-8-ribityllumazine synthase (159 aa).

Residues Tyr23, 58–60, and 82–84 contribute to the 5-amino-6-(D-ribitylamino)uracil site; these read AYE and TII. His90 serves as the catalytic Proton donor. Residue Ile115 participates in 5-amino-6-(D-ribitylamino)uracil binding. Arg129 contributes to the (2S)-2-hydroxy-3-oxobutyl phosphate binding site.

The protein belongs to the DMRL synthase family. As to quaternary structure, forms an icosahedral capsid composed of 60 subunits, arranged as a dodecamer of pentamers.

The catalysed reaction is (2S)-2-hydroxy-3-oxobutyl phosphate + 5-amino-6-(D-ribitylamino)uracil = 6,7-dimethyl-8-(1-D-ribityl)lumazine + phosphate + 2 H2O + H(+). It functions in the pathway cofactor biosynthesis; riboflavin biosynthesis; riboflavin from 2-hydroxy-3-oxobutyl phosphate and 5-amino-6-(D-ribitylamino)uracil: step 1/2. Its function is as follows. Catalyzes the formation of 6,7-dimethyl-8-ribityllumazine by condensation of 5-amino-6-(D-ribitylamino)uracil with 3,4-dihydroxy-2-butanone 4-phosphate. This is the penultimate step in the biosynthesis of riboflavin. The polypeptide is 6,7-dimethyl-8-ribityllumazine synthase (Buchnera aphidicola subsp. Baizongia pistaciae (strain Bp)).